The primary structure comprises 110 residues: U1-lycotoxin-Ls1hh (110 aa).

A signal peptide spans 1 to 20; it reads MKFVLLFGVLLVTLFSYSSA. Positions 21–44 are excised as a propeptide; the sequence is EMLDDFDQADEDELLSLIEKEEAR. 4 disulfide bridges follow: Cys-47–Cys-62, Cys-54–Cys-71, Cys-61–Cys-89, and Cys-73–Cys-87.

This sequence belongs to the neurotoxin 19 (CSTX) family. 03 subfamily. As to expression, expressed by the venom gland.

The protein localises to the secreted. The chain is U1-lycotoxin-Ls1hh from Lycosa singoriensis (Wolf spider).